The following is a 417-amino-acid chain: D-amino acid dehydrogenase (417 aa).

3–17 is a binding site for FAD; the sequence is IVVLGGGVVGVTSAW.

The protein belongs to the DadA oxidoreductase family. The cofactor is FAD.

It carries out the reaction a D-alpha-amino acid + A + H2O = a 2-oxocarboxylate + AH2 + NH4(+). The protein operates within amino-acid degradation; D-alanine degradation; NH(3) and pyruvate from D-alanine: step 1/1. In terms of biological role, oxidative deamination of D-amino acids. This is D-amino acid dehydrogenase from Aeromonas salmonicida (strain A449).